We begin with the raw amino-acid sequence, 407 residues long: UDP-N-acetyl-D-mannosamine dehydrogenase (407 aa).

The protein belongs to the UDP-glucose/GDP-mannose dehydrogenase family.

The enzyme catalyses UDP-N-acetyl-alpha-D-mannosamine + 2 NAD(+) + H2O = UDP-N-acetyl-alpha-D-mannosaminouronate + 2 NADH + 3 H(+). It participates in capsule biogenesis; capsule polysaccharide biosynthesis. Dehydrogenase involved in the biosynthesis of capsular polysaccharides. Catalyzes the NAD(+)-dependent oxidation of UDP-N-acetyl-D-mannosamine (UDP-ManNAc) to UDP-N-acetyl-D-mannosaminuronic acid (UDP-ManNAcA). This is UDP-N-acetyl-D-mannosamine dehydrogenase from Campylobacter jejuni.